We begin with the raw amino-acid sequence, 235 residues long: Flagellar L-ring protein (235 aa).

The N-terminal stretch at 1 to 18 (MNKIAGTLFLLAGLAMAG) is a signal peptide. The N-palmitoyl cysteine moiety is linked to residue cysteine 19. The S-diacylglycerol cysteine moiety is linked to residue cysteine 19.

This sequence belongs to the FlgH family. In terms of assembly, the basal body constitutes a major portion of the flagellar organelle and consists of four rings (L,P,S, and M) mounted on a central rod.

Its subcellular location is the cell outer membrane. It localises to the bacterial flagellum basal body. Assembles around the rod to form the L-ring and probably protects the motor/basal body from shearing forces during rotation. In Chelativorans sp. (strain BNC1), this protein is Flagellar L-ring protein.